A 362-amino-acid polypeptide reads, in one-letter code: Major capsid protein VP1 (362 aa).

The Bipartite nuclear localization signal signature appears at 5-19; it reads KRKGECPGAAPKKPK. Thr338 carries the post-translational modification Phosphothreonine; by host.

Belongs to the polyomaviruses coat protein VP1 family. In terms of assembly, homomultimer; disulfide-linked. The virus capsid is composed of 72 icosahedral units, each one composed of five disulfide-linked copies of VP1. Interacts with minor capsid proteins VP2 and VP3.

It is found in the virion. The protein localises to the host nucleus. Forms an icosahedral capsid with a T=7 symmetry and a 40 nm diameter. The capsid is composed of 72 pentamers linked to each other by disulfide bonds and associated with VP2 or VP3 proteins. Interacts with sialic acids on the cell surface to provide virion attachment to target cell. Once attached, the virion is internalized by endocytosis and traffics to the endoplasmic reticulum. Inside the endoplasmic reticulum, the protein folding machinery isomerizes VP1 interpentamer disulfide bonds, thereby triggering initial uncoating. Next, the virion uses the endoplasmic reticulum-associated degradation machinery to probably translocate in the cytosol before reaching the nucleus. Nuclear entry of the viral DNA involves the selective exposure and importin recognition of VP2/Vp3 nuclear localization signal. In late phase of infection, neo-synthesized VP1 encapsulates replicated genomic DNA in the nucleus, and participates in rearranging nucleosomes around the viral DNA. The chain is Major capsid protein VP1 from Simian virus 12 (strain wt100) (SV-12).